A 375-amino-acid chain; its full sequence is Chaperone protein DnaJ (375 aa).

The region spanning 4 to 69 is the J domain; the sequence is DLYETLGVQK…QKRAAYDRYG (66 aa). The segment at 133-211 adopts a CR-type zinc-finger fold; it reads GKTAQIRVPT…CHGQGRVVEE (79 aa). Zn(2+) is bound by residues cysteine 146, cysteine 149, cysteine 163, cysteine 166, cysteine 185, cysteine 188, cysteine 199, and cysteine 202. CXXCXGXG motif repeat units follow at residues 146 to 153, 163 to 170, 185 to 192, and 199 to 206; these read CDVCTGTG, CGTCQGTG, CPTCGGRG, and CTKCHGQG.

It belongs to the DnaJ family. As to quaternary structure, homodimer. Zn(2+) serves as cofactor.

Its subcellular location is the cytoplasm. In terms of biological role, participates actively in the response to hyperosmotic and heat shock by preventing the aggregation of stress-denatured proteins and by disaggregating proteins, also in an autonomous, DnaK-independent fashion. Unfolded proteins bind initially to DnaJ; upon interaction with the DnaJ-bound protein, DnaK hydrolyzes its bound ATP, resulting in the formation of a stable complex. GrpE releases ADP from DnaK; ATP binding to DnaK triggers the release of the substrate protein, thus completing the reaction cycle. Several rounds of ATP-dependent interactions between DnaJ, DnaK and GrpE are required for fully efficient folding. Also involved, together with DnaK and GrpE, in the DNA replication of plasmids through activation of initiation proteins. The protein is Chaperone protein DnaJ of Sinorhizobium medicae (strain WSM419) (Ensifer medicae).